We begin with the raw amino-acid sequence, 205 residues long: CASP-like protein 2A1 (205 aa).

The disordered stretch occupies residues 1–25 (MDKSKVSTAVGGETPVGLITGSRDD). The Cytoplasmic segment spans residues 1–34 (MDKSKVSTAVGGETPVGLITGSRDDELESGSMRT). A helical transmembrane segment spans residues 35-55 (AETVLRLVPMAFCISALVLML). Over 56 to 76 (KNSQTNDFGTLSYSDLGAFRY) the chain is Extracellular. The chain crosses the membrane as a helical span at residues 77 to 97 (LVHANGICAGYSLLSAIIVAM). The Cytoplasmic segment spans residues 98–105 (PRPSTMSR). Residues 106-126 (AWTFFFLDQVLTYVILAAAAV) traverse the membrane as a helical segment. Residues 127–156 (SVEALYLARKGDIAITWSAACVSFGGFCHK) lie on the Extracellular side of the membrane. Residues 157–177 (AITSAVITFIVVVCYALLSLV) form a helical membrane-spanning segment. Over 178–205 (SSYKLFSRYGAPDVSYPGKGIEVAAFHS) the chain is Cytoplasmic.

This sequence belongs to the Casparian strip membrane proteins (CASP) family. In terms of assembly, homodimer and heterodimers.

Its subcellular location is the cell membrane. This chain is CASP-like protein 2A1, found in Ricinus communis (Castor bean).